A 426-amino-acid polypeptide reads, in one-letter code: Gamma-glutamyl phosphate reductase (426 aa).

This sequence belongs to the gamma-glutamyl phosphate reductase family.

It is found in the cytoplasm. It catalyses the reaction L-glutamate 5-semialdehyde + phosphate + NADP(+) = L-glutamyl 5-phosphate + NADPH + H(+). It functions in the pathway amino-acid biosynthesis; L-proline biosynthesis; L-glutamate 5-semialdehyde from L-glutamate: step 2/2. In terms of biological role, catalyzes the NADPH-dependent reduction of L-glutamate 5-phosphate into L-glutamate 5-semialdehyde and phosphate. The product spontaneously undergoes cyclization to form 1-pyrroline-5-carboxylate. This Sorangium cellulosum (strain So ce56) (Polyangium cellulosum (strain So ce56)) protein is Gamma-glutamyl phosphate reductase.